A 189-amino-acid chain; its full sequence is Ribosome maturation factor RimM (189 aa).

The 83-residue stretch at 95–177 (EDDEFYYADL…AGLVDDPEEL (83 aa)) folds into the PRC barrel domain.

The protein belongs to the RimM family. Binds ribosomal protein uS19.

It localises to the cytoplasm. An accessory protein needed during the final step in the assembly of 30S ribosomal subunit, possibly for assembly of the head region. Essential for efficient processing of 16S rRNA. May be needed both before and after RbfA during the maturation of 16S rRNA. It has affinity for free ribosomal 30S subunits but not for 70S ribosomes. This chain is Ribosome maturation factor RimM, found in Rhizobium leguminosarum bv. trifolii (strain WSM2304).